Here is a 405-residue protein sequence, read N- to C-terminus: 3-hydroxy-3-methylglutaryl-coenzyme A reductase (405 aa).

Residues Glu-101 and Asp-305 each act as charge relay system in the active site. Residue His-400 is the Proton donor of the active site.

This sequence belongs to the HMG-CoA reductase family. In terms of assembly, homodimer.

The protein resides in the cytoplasm. The catalysed reaction is (R)-mevalonate + 2 NADP(+) + CoA = (3S)-3-hydroxy-3-methylglutaryl-CoA + 2 NADPH + 2 H(+). It participates in metabolic intermediate biosynthesis; (R)-mevalonate biosynthesis; (R)-mevalonate from acetyl-CoA: step 3/3. With respect to regulation, is competitively inhibited by lovastatin (formerly called mevinolin). Lovastatin also blocks the growth of H.salinarum, and this effect is reversed by addition of mevalonate, indicating the critical role that the mevalonate pathway plays in isoprenoid biosynthesis by these archaea. In terms of biological role, catalyzes the NADPH-dependent reductive deacylation of (S)-3-hydroxy-3-methylglutaryl-CoA (HMG-CoA) to (R)-mevalonate. Cannot use NADH instead of NADPH. Functions in the mevalonate (MVA) pathway leading to isopentenyl diphosphate (IPP), a key precursor for the biosynthesis of isoprenoid compounds such as archaeal membrane lipids. The sequence is that of 3-hydroxy-3-methylglutaryl-coenzyme A reductase (hmgA) from Halobacterium salinarum (strain ATCC 29341 / DSM 671 / R1).